The following is a 500-amino-acid chain: Lysine--tRNA ligase (500 aa).

Residues Glu410 and Glu417 each contribute to the Mg(2+) site.

It belongs to the class-II aminoacyl-tRNA synthetase family. As to quaternary structure, homodimer. Mg(2+) serves as cofactor.

It is found in the cytoplasm. It carries out the reaction tRNA(Lys) + L-lysine + ATP = L-lysyl-tRNA(Lys) + AMP + diphosphate. This chain is Lysine--tRNA ligase, found in Pseudomonas putida (strain W619).